The following is a 1112-amino-acid chain: Phytochrome E (1112 aa).

The disordered stretch occupies residues 1–20; the sequence is MGFESSSSAASNMKPQPQKS. The region spanning 217-387 is the GAF domain; the sequence is DIGALCDTVV…AFGLQLQMEL (171 aa). A phytochromobilin-binding site is contributed by cysteine 322. 2 PAS domains span residues 595 to 666 and 732 to 803; these read FVCE…LQGE and DYKT…LISL. The Histidine kinase domain maps to 877–1096; that stretch reads YVRQEIKNPL…FFQVDLQVKT (220 aa).

Belongs to the phytochrome family. As to quaternary structure, homodimer. Post-translationally, contains one covalently linked phytochromobilin chromophore.

Regulatory photoreceptor which exists in two forms that are reversibly interconvertible by light: the Pr form that absorbs maximally in the red region of the spectrum and the Pfr form that absorbs maximally in the far-red region. Photoconversion of Pr to Pfr induces an array of morphogenic responses, whereas reconversion of Pfr to Pr cancels the induction of those responses. Pfr controls the expression of a number of nuclear genes including those encoding the small subunit of ribulose-bisphosphate carboxylase, chlorophyll A/B binding protein, protochlorophyllide reductase, rRNA, etc. It also controls the expression of its own gene(s) in a negative feedback fashion. This chain is Phytochrome E (PHYE), found in Arabidopsis thaliana (Mouse-ear cress).